Consider the following 504-residue polypeptide: Cytochrome P450 2D10 (504 aa).

O-linked (GlcNAc) serine glycosylation occurs at Ser-382. Cys-446 serves as a coordination point for heme.

The protein belongs to the cytochrome P450 family. Heme is required as a cofactor.

Its subcellular location is the endoplasmic reticulum membrane. The protein localises to the microsome membrane. The catalysed reaction is an organic molecule + reduced [NADPH--hemoprotein reductase] + O2 = an alcohol + oxidized [NADPH--hemoprotein reductase] + H2O + H(+). Its function is as follows. Cytochromes P450 are a group of heme-thiolate monooxygenases. In liver microsomes, this enzyme is involved in an NADPH-dependent electron transport pathway. It oxidizes a variety of structurally unrelated compounds, including steroids, fatty acids, and xenobiotics. This chain is Cytochrome P450 2D10 (Cyp2d10), found in Rattus norvegicus (Rat).